We begin with the raw amino-acid sequence, 808 residues long: Beta-catenin/armadillo-related protein 1 (808 aa).

The segment at methionine 1–methionine 85 is involved in transcriptional activation. ARM repeat units lie at residues arginine 118–lysine 160, cysteine 165–serine 209, and serine 369–alanine 408. The segment at asparagine 541–phenylalanine 808 is involved in transcriptional activation. Residues threonine 702–phenylalanine 808 form a disordered region. The span at tyrosine 723–asparagine 736 shows a compositional bias: polar residues. Low complexity predominate over residues serine 737–tyrosine 750. Over residues asparagine 786–serine 798 the composition is skewed to polar residues.

It belongs to the beta-catenin family. As to quaternary structure, interacts with apr-1, axl-1, daf-16, lin-23, and pop-1 (via acidic region in N-terminus 1-44). Interacts (via ARM repeats) with pry-1.

The protein localises to the cytoplasm. Its subcellular location is the nucleus. It is found in the membrane. The protein resides in the cell junction. Its function is as follows. Participates in the Wnt signaling pathway which affects cell fate and may regulate the stem cell divisions of seam cells during larval development. Functions as a transcriptional activator but is dependent on the interaction with pop-1. Involved in maintaining lin-39 Hox expression and regulating glr-1 abundance at the synapses. Required for mab-5 expression during Q neuroblast migration and for oxidative stress-induced daf-16 signaling. Has roles in egg laying, vulva precursor cell fate determination, Q neuroblast migration, posterior ectodermal cell P12 specification, movement, body length, male tail development and dauer induction. Functionally redundant to wrm-1 and hmp-2. The chain is Beta-catenin/armadillo-related protein 1 (bar-1) from Caenorhabditis briggsae.